Here is a 625-residue protein sequence, read N- to C-terminus: Coagulation factor XI (625 aa).

The signal sequence occupies residues 1–18; the sequence is MTLLYQMVHFALFASVAG. 4 Apple domains span residues 20-103, 110-193, 200-283, and 291-374; these read CVTT…SKQC, CSKD…LKSC, CIRD…LQHC, and CHSS…LRLC. Disulfide bonds link Cys20/Cys103, Cys46/Cys76, Cys50/Cys56, Cys110/Cys193, Cys136/Cys165, Cys140/Cys146, Cys200/Cys283, Cys226/Cys255, Cys230/Cys236, Cys291/Cys374, Cys317/Cys346, Cys321/Cys327, Cys380/Cys500, Cys416/Cys432, Cys514/Cys581, Cys545/Cys560, and Cys571/Cys599. 2 N-linked (GlcNAc...) asparagine glycosylation sites follow: Asn90 and Asn126. Positions 388–623 constitute a Peptidase S1 domain; it reads IVGGTQSVHG…YVDWILEKTQ (236 aa). The Charge relay system role is filled by His431. N-linked (GlcNAc...) asparagine glycosylation is present at Asn450. Asp480 functions as the Charge relay system in the catalytic mechanism. Asn491 is a glycosylation site (N-linked (GlcNAc...) asparagine). Residue 547-550 participates in heparin binding; it reads AGYR. Catalysis depends on Ser575, which acts as the Charge relay system.

Belongs to the peptidase S1 family. Plasma kallikrein subfamily. As to quaternary structure, homodimer; disulfide-linked. After activation the heavy and light chains are also linked by a disulfide bond. Interacts (activated) with F9 (inactive and activated) in calcium-dependent manner. Forms a heterodimer with SERPINA5. Activated by factor XIIa (or XII), which cleaves each polypeptide after Arg-387 into the light chain, which contains the active site, and the heavy chain, which associates with high molecular weight (HMW) kininogen. Activated by F12 (activated); the presence of negatively charged surfaces accelerates activation. Activated by F2 (thrombin); the presence of negatively charged surfaces, such as polyphosphate and dextran sulfate, strongly accelerates activation. Autoactivated; the presence of negatively charged surfaces, such as polyphosphate and dextran sulfate, accelerates autoactivation and autolysis. In terms of processing, N-glycosylated on both chains. N-glycosylated sites mainly consist of nonfucosylated sialylated biantennary (in high abundance) and/or triantennary (in low abundance) complex structures.

The protein localises to the secreted. It catalyses the reaction Selective cleavage of Arg-|-Ala and Arg-|-Val bonds in factor IX to form factor IXa.. Inhibited by SERPINA5. In terms of biological role, factor XI triggers the middle phase of the intrinsic pathway of blood coagulation by activating factor IX. The protein is Coagulation factor XI (F11) of Bos taurus (Bovine).